We begin with the raw amino-acid sequence, 105 residues long: Large ribosomal subunit protein P1 (105 aa).

Met1 is subject to Blocked amino end (Met). Residues 65–76 show a composition bias toward low complexity; the sequence is VAAPAGQQTQQA. A disordered region spans residues 65 to 105; sequence VAAPAGQQTQQAAEKKEEKKEEEKKGPSEEEIGGGLSSLFG. The segment covering 77-92 has biased composition (basic and acidic residues); the sequence is AEKKEEKKEEEKKGPS.

It belongs to the eukaryotic ribosomal protein P1/P2 family. In terms of assembly, part of the 50S ribosomal subunit. Homodimer, it forms part of the ribosomal stalk which helps the ribosome interact with GTP-bound translation factors. Forms a heptameric uL10/P0(P1)2(P1)2(P1)2 complex, where uL10/P0 forms an elongated spine to which the P1 dimers bind in a sequential fashion.

Its function is as follows. Forms part of the ribosomal stalk, playing a central role in the interaction of the ribosome with GTP-bound translation factors. This Sulfolobus acidocaldarius (strain ATCC 33909 / DSM 639 / JCM 8929 / NBRC 15157 / NCIMB 11770) protein is Large ribosomal subunit protein P1.